Consider the following 672-residue polypeptide: Acetoacetyl-CoA synthetase (672 aa).

This sequence belongs to the ATP-dependent AMP-binding enzyme family. As to expression, abundant in male subcutaneous white adipose tissue after weaning. In white adipose tissue, it is preferentially detected in mature adipocytes but not in preadipocytes. The expression in primary preadipocytes increases during the adipocyte differentiation. In brain, it is expressed in the midbrain, pons/medulla, cerebral cortex, hippocampus and cerebellum. The expression in the cerebellum is restricted primarily to glial cells, while in the cerebral cortex, it is restricted to neuronal cells.

It is found in the cytoplasm. The protein localises to the cytosol. It catalyses the reaction acetoacetate + ATP + CoA = acetoacetyl-CoA + AMP + diphosphate. Functionally, converts acetoacetate to acetoacetyl-CoA in the cytosol. Ketone body-utilizing enzyme, responsible for the synthesis of cholesterol and fatty acids. The protein is Acetoacetyl-CoA synthetase (Aacs) of Rattus norvegicus (Rat).